Here is a 417-residue protein sequence, read N- to C-terminus: D-galactonate dehydratase family member SeV_A0456 (417 aa).

Residues Gln43 and His127 each contribute to the substrate site. Catalysis depends on Tyr158, which acts as the Proton donor/acceptor. Asp223 is a Mg(2+) binding site. Residue His225 is the Proton donor/acceptor of the active site. Mg(2+) contacts are provided by Glu249 and Glu275. Residues Glu275, Arg296, His325, Asp329, and Glu352 each contribute to the substrate site.

The protein belongs to the mandelate racemase/muconate lactonizing enzyme family. GalD subfamily. Mg(2+) serves as cofactor.

The catalysed reaction is D-gluconate = 2-dehydro-3-deoxy-D-gluconate + H2O. In terms of biological role, has low D-gluconate dehydratase activity (in vitro), suggesting that it has no significant role in D-gluconate degradation in vivo. Has no detectable activity with a panel of 70 other acid sugars (in vitro). The polypeptide is D-galactonate dehydratase family member SeV_A0456 (Salmonella virchow (strain SL491)).